The sequence spans 66 residues: Large ribosomal subunit protein uL29 (66 aa).

It belongs to the universal ribosomal protein uL29 family.

The protein is Large ribosomal subunit protein uL29 of Rhizobium meliloti (strain 1021) (Ensifer meliloti).